The primary structure comprises 558 residues: N-acetylglucosamine-6-O-sulfatase (558 aa).

Residue serine 101 is modified to 3-oxoalanine (Ser).

This sequence belongs to the sulfatase family. In terms of processing, the conversion to 3-oxoalanine (also known as C-formylglycine, FGly), of a serine or cysteine residue in prokaryotes and of a cysteine residue in eukaryotes, is critical for catalytic activity.

Functionally, exosulfatase involved in the degradation of the glycosaminoglycan (GAG) heparan sulfate (HS). Catalyzes the hydrolysis of the 6-sulfate groups of the N-acetyl-D-glucosamine 6-sulfate units. GAG-specific sulfatases play a key role in the persistence of the major human gut symbiont B.thetaiotaomicron in the host gastrointestinal tract. This is N-acetylglucosamine-6-O-sulfatase from Bacteroides thetaiotaomicron (strain ATCC 29148 / DSM 2079 / JCM 5827 / CCUG 10774 / NCTC 10582 / VPI-5482 / E50).